The primary structure comprises 146 residues: Large ribosomal subunit protein uL13 (146 aa).

The interval 126 to 146 (AGPKHPHAAQQPKVYEPRPRG) is disordered.

This sequence belongs to the universal ribosomal protein uL13 family. Part of the 50S ribosomal subunit.

In terms of biological role, this protein is one of the early assembly proteins of the 50S ribosomal subunit, although it is not seen to bind rRNA by itself. It is important during the early stages of 50S assembly. The chain is Large ribosomal subunit protein uL13 from Roseiflexus castenholzii (strain DSM 13941 / HLO8).